The following is a 355-amino-acid chain: Inositol polyphosphate multikinase (355 aa).

The residue at position 1 (Met-1) is an N-acetylmethionine. Lys-31 lines the ATP pocket. Phosphoserine is present on Ser-97. ATP contacts are provided by residues 118 to 120 (ENL) and Asp-131. 127–135 (PNILDIKLG) contributes to the substrate binding site. Positions 271 and 274 each coordinate Ca(2+). Acidic residues predominate over residues 284-304 (FIDDDDDDDDNDDDDDDDAEG). The interval 284–317 (FIDDDDDDDDNDDDDDDDAEGSSEGPKDKKTTGS) is disordered. Asp-325 is an ATP binding site. Gly-334 is a binding site for Ca(2+).

This sequence belongs to the inositol phosphokinase (IPK) family. In terms of assembly, interacts with ARG80 and MCM1. Requires Ca(2+) as cofactor.

It localises to the nucleus. It catalyses the reaction 1D-myo-inositol 1,4,5-trisphosphate + 2 ATP = 1D-myo-inositol 1,3,4,5,6-pentakisphosphate + 2 ADP + 2 H(+). It carries out the reaction 1D-myo-inositol 1,4,5-trisphosphate + ATP = 1D-myo-inositol 1,4,5,6-tetrakisphosphate + ADP + H(+). The catalysed reaction is 1D-myo-inositol 1,4,5-trisphosphate + ATP = 1D-myo-inositol 1,3,4,5-tetrakisphosphate + ADP + H(+). The enzyme catalyses 1D-myo-inositol 1,4,5,6-tetrakisphosphate + ATP = 1D-myo-inositol 1,3,4,5,6-pentakisphosphate + ADP + H(+). It catalyses the reaction a 1,2-diacyl-sn-glycero-3-phospho-(1D-myo-inositol-4,5-bisphosphate) + ATP = a 1,2-diacyl-sn-glycero-3-phospho-(1D-myo-inositol-3,4,5-trisphosphate) + ADP + H(+). Inositol phosphate kinase with both monophosphoinositol and diphosphoinositol polyphosphate synthase activities. Able to phosphorylate inositol 1,4,5-trisphosphate (Ins(1,4,5)P3) on both the carbon-3 and carbon-6 positions to synthesize inositol 1,3,4,5-tetrakisphosphate (Ins(1,3,4,5)P4) and inositol 1,4,5,6-tetrakisphosphate (Ins(1,4,5,6)P4), and then to subsequently phosphorylate and convert either isomer of InsP4 to inositol 1,3,4,5,6-pentakisphosphate (Ins(1,3,4,5,6)P5). Its predominant in vivo catalytic function is to convert Ins(1,4,5)P3 to Ins(1,4,5,6)P4 to Ins(1,3,4,5,6)P5 via 6- and 3-kinase activities. It can also use Ins(1,3,4,5,6)P5 as a substrate and act as a diphosphoinositol polyphosphate synthase to generate two different isomers of PP-InsP4. Also has a role in transcription regulation. Forms a complex with ARG80, ARG81 and MCM1 (ArgR-MCM1), which coordinates the expression of arginine anabolic and catabolic genes in response to arginine. Recruits ARG80 and MCM21 to stabilize them. Neither the kinase activity nor inositol phosphates are required for the formation of ArgR-MCM1 transcriptional complexes on DNA promoter elements and the control of arginine metabolism. In contrast, only the catalytic activity is required for PHO gene repression by phosphate and for NCR gene activation in response to nitrogen availability, indicating a role for inositol pyrophosphates in these controls. Inositol polyphosphates may be involved in the regulation of chromatin remodeling of transcription. Regulates nuclear mRNA export via inositol phosphate metabolism. Also has lipid kinase activity, transforming the lipid inositol phosphatidylinositol 4,5-bisphosphate (PI(4,5)P2) into phosphatidylinositol 3,4,5-trisphosphate (PI(3,4,5)P3) in the nucleus. Its kinase activity is necessary for the propagation of most [PSI+] prion variants. The sequence is that of Inositol polyphosphate multikinase (ARG82) from Saccharomyces cerevisiae (strain ATCC 204508 / S288c) (Baker's yeast).